A 116-amino-acid polypeptide reads, in one-letter code: Regulator of ribonuclease activity B (116 aa).

It belongs to the RraB family. Interacts with the C-terminal region of Rne.

The protein resides in the cytoplasm. Functionally, globally modulates RNA abundance by binding to RNase E (Rne) and regulating its endonucleolytic activity. Can modulate Rne action in a substrate-dependent manner by altering the composition of the degradosome. The polypeptide is Regulator of ribonuclease activity B (Colwellia psychrerythraea (strain 34H / ATCC BAA-681) (Vibrio psychroerythus)).